The primary structure comprises 185 residues: Putative manganese efflux pump MntP (185 aa).

Helical transmembrane passes span 3-23, 41-61, 70-90, 101-121, 123-143, and 165-185; these read PFAV…VSVG, AVFG…GVAA, HWLA…AAVW, SFTV…AVGV, LAFL…ATFL, and AVAG…HLTA.

It belongs to the MntP (TC 9.B.29) family.

The protein resides in the cell inner membrane. Its function is as follows. Probably functions as a manganese efflux pump. The polypeptide is Putative manganese efflux pump MntP (Bradyrhizobium sp. (strain BTAi1 / ATCC BAA-1182)).